Here is a 195-residue protein sequence, read N- to C-terminus: uncharacterized protein (195 aa).

Positions 1–35 (MASSSSAALRPFGTARLTPGRQTGRQTQQQISAPE) are disordered. The span at 20–30 (GRQTGRQTQQQ) shows a compositional bias: low complexity. Residues 76-184 (GVTVIPRVAR…PASINMALEA (109 aa)) form the MSP domain.

This is an uncharacterized protein from Caenorhabditis elegans.